A 32-amino-acid chain; its full sequence is Parigidin-br1 (32 aa).

A cross-link (cyclopeptide (Gly-Asp)) is located at residues 1 to 32 (GGSVPCGESCVFIPCITSLAGCSCKNKVCYYD). Cystine bridges form between Cys6-Cys22, Cys10-Cys24, and Cys15-Cys29.

This is a cyclic peptide. Expressed in leaves, flowers, peduncles and seeds (at protein level).

Probably participates in a plant defense mechanism. Reduces growth of and increases mortality in larvae of D.saccharalis. Kills cultured SF-9 cells of S.frugiperda probably by disrupting plasma membranes. Has hemolytic activity against human erythrocytes. Has no antibacterial activity against E.coli strain ATCC 8739 and S.aureus strain ATCC 25923. In Palicourea rigida, this protein is Parigidin-br1.